The following is a 485-amino-acid chain: Glutamyl-tRNA(Gln) amidotransferase subunit A (485 aa).

Catalysis depends on charge relay system residues Lys-79 and Ser-154. The Acyl-ester intermediate role is filled by Ser-178.

Belongs to the amidase family. GatA subfamily. As to quaternary structure, heterotrimer of A, B and C subunits.

It carries out the reaction L-glutamyl-tRNA(Gln) + L-glutamine + ATP + H2O = L-glutaminyl-tRNA(Gln) + L-glutamate + ADP + phosphate + H(+). Allows the formation of correctly charged Gln-tRNA(Gln) through the transamidation of misacylated Glu-tRNA(Gln) in organisms which lack glutaminyl-tRNA synthetase. The reaction takes place in the presence of glutamine and ATP through an activated gamma-phospho-Glu-tRNA(Gln). In Sulfurihydrogenibium sp. (strain YO3AOP1), this protein is Glutamyl-tRNA(Gln) amidotransferase subunit A.